Here is a 339-residue protein sequence, read N- to C-terminus: Phenylalanine--tRNA ligase alpha subunit (339 aa).

Mg(2+) is bound at residue glutamate 247.

The protein belongs to the class-II aminoacyl-tRNA synthetase family. Phe-tRNA synthetase alpha subunit type 1 subfamily. In terms of assembly, tetramer of two alpha and two beta subunits. It depends on Mg(2+) as a cofactor.

The protein resides in the cytoplasm. The enzyme catalyses tRNA(Phe) + L-phenylalanine + ATP = L-phenylalanyl-tRNA(Phe) + AMP + diphosphate + H(+). This Deinococcus geothermalis (strain DSM 11300 / CIP 105573 / AG-3a) protein is Phenylalanine--tRNA ligase alpha subunit.